Reading from the N-terminus, the 318-residue chain is tRNA-modifying protein YgfZ (318 aa).

2 residues coordinate folate: Trp-24 and Trp-185.

It belongs to the tRNA-modifying YgfZ family.

It is found in the cytoplasm. Its function is as follows. Folate-binding protein involved in regulating the level of ATP-DnaA and in the modification of some tRNAs. It is probably a key factor in regulatory networks that act via tRNA modification, such as initiation of chromosomal replication. The chain is tRNA-modifying protein YgfZ from Buchnera aphidicola subsp. Baizongia pistaciae (strain Bp).